The primary structure comprises 450 residues: Solute carrier family 52, riboflavin transporter, member 2 (450 aa).

A run of 5 helical transmembrane segments spans residues 14-34 (LLVALFGMGSWAAVNGIWVEL), 47-67 (LPSYLSVLVALGNLGLLLVTL), 86-106 (GLGIVGTGLLASLWNHVAPVA), 112-132 (VAFLTLAFVLALACCASNVTF), and 147-167 (FFLGQGLSALLPCVLALGQGV). N-linked (GlcNAc...) asparagine glycosylation is present at Asn178. The chain crosses the membrane as a helical span at residues 201–221 (FFWVLTALLGTSAAAFQGLLL). Residues 227–236 (TSEPTTGTGL) are compositionally biased toward low complexity. A disordered region spans residues 227 to 264 (TSEPTTGTGLRVETPGTEEEEEEEEASPLQEPPGQVAG). Over residues 242–252 (GTEEEEEEEEA) the composition is skewed to acidic residues. 5 helical membrane-spanning segments follow: residues 282 to 302 (ACLLGLLAITNALTNGVLPAV), 317 to 337 (LAVVLGSCANPLACFLAMAVL), 344 to 364 (LCGLSLLGMLLGSYLMTLAAL), 369 to 389 (PLVGTSAGVVLVVLSWVLCAG), and 409 to 429 (ALLAAGVAIQVGSLLGAVAMF).

It belongs to the riboflavin transporter family.

It is found in the cell membrane. It catalyses the reaction riboflavin(in) = riboflavin(out). Riboflavin transport is Na(+)-independent but moderately pH-sensitive. Activity is strongly inhibited by riboflavin analogs, such as lumiflavin. Weakly inhibited by flavin adenine dinucleotide (FAD) and flavin mononucleotide (FMN). In terms of biological role, plasma membrane transporter mediating the uptake by cells of the water soluble vitamin B2/riboflavin that plays a key role in biochemical oxidation-reduction reactions of the carbohydrate, lipid, and amino acid metabolism. May also act as a receptor for 4-hydroxybutyrate. This Mus musculus (Mouse) protein is Solute carrier family 52, riboflavin transporter, member 2 (Slc52a2).